The chain runs to 170 residues: Adenine phosphoribosyltransferase (170 aa).

Belongs to the purine/pyrimidine phosphoribosyltransferase family. In terms of assembly, homodimer.

The protein localises to the cytoplasm. It carries out the reaction AMP + diphosphate = 5-phospho-alpha-D-ribose 1-diphosphate + adenine. The protein operates within purine metabolism; AMP biosynthesis via salvage pathway; AMP from adenine: step 1/1. Its function is as follows. Catalyzes a salvage reaction resulting in the formation of AMP, that is energically less costly than de novo synthesis. The protein is Adenine phosphoribosyltransferase of Thermosipho africanus (strain TCF52B).